A 1334-amino-acid chain; its full sequence is Rho1 guanine nucleotide exchange factor 1 (1334 aa).

Disordered regions lie at residues 1 to 89 (MDYR…ASPV), 135 to 182 (PQVS…SDSV), 203 to 245 (LDQN…TSGT), and 381 to 402 (SLIN…ASSP). Over residues 138–149 (SNHAPNNSNSPS) the composition is skewed to low complexity. Polar residues predominate over residues 150-164 (LTWHTSSGDDSNQNP). The segment covering 170 to 180 (QSQSSTSPVSD) has biased composition (low complexity). Polar residues-rich tracts occupy residues 213–227 (VRSS…NSRL), 234–245 (HTVGSHSFTSGT), and 381–400 (SLIN…SEAS). Ser381 carries the phosphoserine modification. A DH domain is found at 621–808 (KRQEVICEVI…RGFLSRLNVE (188 aa)). One can recognise a PH domain in the interval 843 to 973 (QLIFKGPLKK…WLEHIDNQQT (131 aa)). Residues 995–1293 (DNKVNAIGVY…RLLADGRGKL (299 aa)) enclose the CNH domain.

The protein resides in the cytoplasm. Functionally, stimulates the exchange of Rho1 and Rho5 GDP-bound form into GTP-bound form. Controls septum formation, cell wall synthesis and localization of F-actin patches. Coordinates actin deposition with cell wall biosynthesis during bipolar growth. The polypeptide is Rho1 guanine nucleotide exchange factor 1 (rgf1) (Schizosaccharomyces pombe (strain 972 / ATCC 24843) (Fission yeast)).